Consider the following 1026-residue polypeptide: Multidrug resistance protein MdtC (1026 aa).

10 helical membrane-spanning segments follow: residues 12–34 (VATL…LLPV), 336–353 (QSLI…FLFL), 360–382 (AIPA…LCGF), 431–450 (VGFT…LPLL), 463–485 (FAVT…TPML), 525–547 (HARW…YISI), 853–875 (LLLI…ESYV), 895–917 (LEWF…IGIV), 948–970 (LLRF…PLVL), and 985–1007 (TIVG…VYLF).

It belongs to the resistance-nodulation-cell division (RND) (TC 2.A.6) family. MdtC subfamily. As to quaternary structure, part of a tripartite efflux system composed of MdtA, MdtB and MdtC. MdtC forms a heteromultimer with MdtB.

The protein resides in the cell inner membrane. The chain is Multidrug resistance protein MdtC from Pectobacterium atrosepticum (strain SCRI 1043 / ATCC BAA-672) (Erwinia carotovora subsp. atroseptica).